Here is a 423-residue protein sequence, read N- to C-terminus: Glucose-1-phosphate adenylyltransferase (423 aa).

Alpha-D-glucose 1-phosphate-binding positions include Y107, G172, 187-188 (EK), and S205.

This sequence belongs to the bacterial/plant glucose-1-phosphate adenylyltransferase family. Homotetramer.

It catalyses the reaction alpha-D-glucose 1-phosphate + ATP + H(+) = ADP-alpha-D-glucose + diphosphate. It participates in glycan biosynthesis; glycogen biosynthesis. Functionally, involved in the biosynthesis of ADP-glucose, a building block required for the elongation reactions to produce glycogen. Catalyzes the reaction between ATP and alpha-D-glucose 1-phosphate (G1P) to produce pyrophosphate and ADP-Glc. In Cereibacter sphaeroides (strain ATCC 17025 / ATH 2.4.3) (Rhodobacter sphaeroides), this protein is Glucose-1-phosphate adenylyltransferase.